The sequence spans 38 residues: Photosystem II reaction center protein X (38 aa).

A helical membrane pass occupies residues Phe8 to Phe28.

This sequence belongs to the PsbX family. Type 1 subfamily. As to quaternary structure, PSII is composed of 1 copy each of membrane proteins PsbA, PsbB, PsbC, PsbD, PsbE, PsbF, PsbH, PsbI, PsbJ, PsbK, PsbL, PsbM, PsbT, PsbX, PsbY, PsbZ, Psb30/Ycf12, peripheral proteins PsbO, CyanoQ (PsbQ), PsbU, PsbV and a large number of cofactors. It forms dimeric complexes.

The protein resides in the cellular thylakoid membrane. Involved in the binding and/or turnover of quinones at the Q(B) site of photosystem II (PSII). PSII is a light-driven water plastoquinone oxidoreductase, using light energy to abstract electrons from H(2)O, generating a proton gradient subsequently used for ATP formation. This is Photosystem II reaction center protein X from Synechococcus sp. (strain JA-2-3B'a(2-13)) (Cyanobacteria bacterium Yellowstone B-Prime).